Here is a 347-residue protein sequence, read N- to C-terminus: Protein RecA (347 aa).

G66–T73 is a binding site for ATP.

It belongs to the RecA family.

Its subcellular location is the cytoplasm. Its function is as follows. Can catalyze the hydrolysis of ATP in the presence of single-stranded DNA, the ATP-dependent uptake of single-stranded DNA by duplex DNA, and the ATP-dependent hybridization of homologous single-stranded DNAs. It interacts with LexA causing its activation and leading to its autocatalytic cleavage. This Allochromatium vinosum (Chromatium vinosum) protein is Protein RecA.